The chain runs to 788 residues: Histidine--tRNA ligase, cytoplasmic (788 aa).

A disordered region spans residues 252 to 286 (PQACEENEAGSSTENPHASGEKPKGDKKSKKKKTL).

This sequence belongs to the class-II aminoacyl-tRNA synthetase family. In terms of assembly, homodimer.

It carries out the reaction tRNA(His) + L-histidine + ATP = L-histidyl-tRNA(His) + AMP + diphosphate + H(+). This is Histidine--tRNA ligase, cytoplasmic from Oryza sativa subsp. japonica (Rice).